The following is an 825-amino-acid chain: NT-3 growth factor receptor (825 aa).

A signal peptide spans 1-31 (MDVSLCPAKCSFWRIFLLGSVWLDYVGSVLA). 2 cysteine pairs are disulfide-bonded: Cys32–Cys38 and Cys36–Cys45. The Extracellular portion of the chain corresponds to 32 to 429 (CPANCVCSKT…TVTHKPEEDT (398 aa)). 3 N-linked (GlcNAc...) asparagine glycosylation sites follow: Asn68, Asn72, and Asn79. LRR repeat units follow at residues 104–125 (GLQKLTIKNSGLRSIQPRAFAK) and 128–149 (HLRYINLSSNRLTTLSWQLFQT). N-linked (GlcNAc...) asparagine glycans are attached at residues Asn133 and Asn163. One can recognise an LRRCT domain in the interval 160-209 (NFFNCSCDIRWMQLWQEQGEAKLNSQSLYCISADGSQLPLFRMNISQCDL). 2 disulfide bridges follow: Cys164–Cys189 and Cys166–Cys207. N-linked (GlcNAc...) asparagine glycans are attached at residues Asn203, Asn218, Asn232, Asn259, Asn267, Asn272, and Asn294. 2 consecutive Ig-like C2-type domains span residues 210–300 (PEIS…VALT) and 309–382 (SLEE…NRQE). An intrachain disulfide couples Cys231 to Cys284. Cysteines 320 and 362 form a disulfide. N-linked (GlcNAc...) asparagine glycosylation is found at Asn375 and Asn388. Residues 430–453 (FGVSIAVGLAAFACVLLVVLFIMI) form a helical membrane-spanning segment. The Cytoplasmic portion of the chain corresponds to 454–825 (NKYGRRSKFG…ATPIYLDILG (372 aa)). Tyr516 carries the post-translational modification Phosphotyrosine; by autocatalysis. The Protein kinase domain occupies 538–814 (IVLKRELGEG…EIYKILHALG (277 aa)). ATP-binding positions include 544–552 (LGEGAFGKV) and Lys572. Residue Asp679 is the Proton acceptor of the active site. Phosphotyrosine; by autocatalysis occurs at positions 705, 709, 710, and 820.

The protein belongs to the protein kinase superfamily. Tyr protein kinase family. Insulin receptor subfamily. In terms of assembly, exists in a dynamic equilibrium between monomeric (low affinity) and dimeric (high affinity) structures. Binds SH2B2. Interacts with SQSTM1 and KIDINS220. Interacts with PTPRS. Interacts with MAPK8IP3/JIP3. Post-translationally, ligand-mediated auto-phosphorylation. Preferentially in the brain, low levels in the ovaries.

Its subcellular location is the membrane. The enzyme catalyses L-tyrosyl-[protein] + ATP = O-phospho-L-tyrosyl-[protein] + ADP + H(+). Receptor tyrosine kinase involved in nervous system and probably heart development. Upon binding of its ligand NTF3/neurotrophin-3, NTRK3 autophosphorylates and activates different signaling pathways, including the phosphatidylinositol 3-kinase/AKT and the MAPK pathways, that control cell survival and differentiation. This chain is NT-3 growth factor receptor (NTRK3), found in Sus scrofa (Pig).